Reading from the N-terminus, the 96-residue chain is Small ribosomal subunit protein uS19 (96 aa).

Residues M1 to V30 are disordered. Basic and acidic residues predominate over residues P9–K24.

Belongs to the universal ribosomal protein uS19 family.

Functionally, protein S19 forms a complex with S13 that binds strongly to the 16S ribosomal RNA. In Anaeromyxobacter sp. (strain Fw109-5), this protein is Small ribosomal subunit protein uS19.